A 106-amino-acid polypeptide reads, in one-letter code: Immunoglobulin lambda constant 2 (106 aa).

An Ig-like domain is found at 7–101 (PSVTLFPPSS…EGSTVEKTVA (95 aa)). A disulfide bridge links cysteine 28 with cysteine 87.

Immunoglobulins are composed of two identical heavy chains and two identical light chains; disulfide-linked.

It localises to the secreted. The protein resides in the cell membrane. Constant region of immunoglobulin light chains. Immunoglobulins, also known as antibodies, are membrane-bound or secreted glycoproteins produced by B lymphocytes. In the recognition phase of humoral immunity, the membrane-bound immunoglobulins serve as receptors which, upon binding of a specific antigen, trigger the clonal expansion and differentiation of B lymphocytes into immunoglobulins-secreting plasma cells. Secreted immunoglobulins mediate the effector phase of humoral immunity, which results in the elimination of bound antigens. The antigen binding site is formed by the variable domain of one heavy chain, together with that of its associated light chain. Thus, each immunoglobulin has two antigen binding sites with remarkable affinity for a particular antigen. The variable domains are assembled by a process called V-(D)-J rearrangement and can then be subjected to somatic hypermutations which, after exposure to antigen and selection, allow affinity maturation for a particular antigen. The sequence is that of Immunoglobulin lambda constant 2 from Homo sapiens (Human).